A 283-amino-acid chain; its full sequence is MASGSACTAVKIGIIGGTGLDDPEILEGRTEKYVDTPFGKPSDALILGKIKNVDCVLLARHGRQHTIMPSKVNYQANIWALKEEGCTHVIVTTACGSLREEIQPGDMVIIDQFIDRTSLRPQTFYDGSHCSARGVCHIPMAEPFCPKTREVLIETAKKLGLRCHSKGTIVTIEGPRFSSRAESLIFRTWGADVVNMTTVPEVVLAKEAGICYASIAMATDYDCWKEHEEAVSVDGVLKTMKENANKAKSLLLTTIPQIGSMEWSETLRNLKNMAQFSVLPPRH.

Threonine 18 provides a ligand contact to phosphate. Lysine 51 is modified (N6-acetyllysine). Phosphate is bound by residues 60–61 (RH) and 93–94 (TA). Methionine 196 is a binding site for substrate. Threonine 197 is a binding site for phosphate. A substrate-binding site is contributed by 220–222 (DYD).

Belongs to the PNP/MTAP phosphorylase family. MTAP subfamily. As to quaternary structure, homotrimer.

The protein localises to the cytoplasm. It localises to the nucleus. It catalyses the reaction S-methyl-5'-thioadenosine + phosphate = 5-(methylsulfanyl)-alpha-D-ribose 1-phosphate + adenine. The protein operates within amino-acid biosynthesis; L-methionine biosynthesis via salvage pathway; S-methyl-5-thio-alpha-D-ribose 1-phosphate from S-methyl-5'-thioadenosine (phosphorylase route): step 1/1. Functionally, catalyzes the reversible phosphorylation of S-methyl-5'-thioadenosine (MTA) to adenine and 5-methylthioribose-1-phosphate. Involved in the breakdown of MTA, a major by-product of polyamine biosynthesis. Responsible for the first step in the methionine salvage pathway after MTA has been generated from S-adenosylmethionine. Has broad substrate specificity with 6-aminopurine nucleosides as preferred substrates. The chain is S-methyl-5'-thioadenosine phosphorylase (Mtap) from Mus musculus (Mouse).